The sequence spans 351 residues: Cyanide hydratase (351 aa).

Residues 6-285 enclose the CN hydrolase domain; it reads YKAAAVTSEP…DGLLFVDIDL (280 aa). The active-site Proton acceptor is the glutamate 46. Lysine 128 is a catalytic residue. The Nucleophile role is filled by cysteine 163.

This sequence belongs to the carbon-nitrogen hydrolase superfamily. Nitrilase family. As to quaternary structure, oligomer of dimers, forming left-handed helical fibers with a diameter of 13 nm but with lengths ranging from approximately 1 um at the leading edge of the peak to having approximately the same length and diameter at the trailing edge.

The catalysed reaction is formamide = hydrogen cyanide + H2O. In terms of biological role, catalyzes the hydration of cyanide to formamide. Degradation of cyanide may be important for plant pathogenic fungi in infection of cyanogenic plants. The protein is Cyanide hydratase of Neurospora crassa (strain ATCC 24698 / 74-OR23-1A / CBS 708.71 / DSM 1257 / FGSC 987).